The following is a 3767-amino-acid chain: Transmembrane cell adhesion receptor mua-3 (3767 aa).

An N-terminal signal peptide occupies residues 1-24 (MQAGISIFFLFLHIPIFFVNCSNS). Topologically, residues 25-3417 (TSCVAREEFQ…CQVAPSNASL (3393 aa)) are extracellular. One can recognise an LDL-receptor class A 1 domain in the interval 26–63 (SCVAREEFQCKMDDSCISMKKWQDGVDDCYDGSDEVCL). Disulfide bonds link Cys-27–Cys-41, Cys-35–Cys-54, Cys-62–Cys-76, Cys-69–Cys-89, Cys-97–Cys-110, Cys-104–Cys-123, Cys-131–Cys-144, Cys-138–Cys-157, Cys-165–Cys-179, and Cys-172–Cys-192. 3 LDL-receptor class A domains span residues 96–132 (GCPA…EPCA), 133–166 (QNQF…EECT), and 167–209 (TSQF…ANCT). 2 N-linked (GlcNAc...) asparagine glycosylation sites follow: Asn-201 and Asn-207. 17 consecutive EGF-like domains span residues 225 to 268 (KLKF…DKCI), 375 to 416 (NRDD…GTCR), 418 to 466 (LIDE…RKCR), 468 to 517 (LINE…RNCT), 519 to 566 (AINE…RKCV), 614 to 663 (RANP…RKCV), 665 to 713 (AVDE…RSCK), 714 to 760 (KADM…RVCR), 762 to 810 (VVNE…KNCV), 816 to 860 (DPPE…GRCV), 861 to 908 (VINE…RICR), 910 to 961 (RVNE…RRCI), 963 to 1012 (AVNE…RICT), 1029 to 1070 (TDDG…GSCR), 1071 to 1118 (VYSA…RICK), 1120 to 1168 (LINE…RQCT), and 1170 to 1219 (SNNE…RVCT). Cystine bridges form between Cys-229–Cys-243, Cys-235–Cys-252, Cys-254–Cys-267, Cys-381–Cys-392, Cys-386–Cys-402, Cys-404–Cys-415, Cys-422–Cys-435, Cys-429–Cys-444, Cys-446–Cys-465, Cys-472–Cys-486, Cys-480–Cys-495, Cys-497–Cys-516, Cys-523–Cys-536, Cys-530–Cys-545, Cys-547–Cys-565, Cys-618–Cys-632, Cys-626–Cys-642, Cys-644–Cys-662, Cys-669–Cys-682, Cys-676–Cys-691, Cys-693–Cys-712, Cys-718–Cys-729, Cys-723–Cys-738, Cys-740–Cys-759, Cys-766–Cys-779, Cys-773–Cys-788, Cys-790–Cys-809, Cys-820–Cys-836, Cys-828–Cys-845, Cys-847–Cys-859, Cys-865–Cys-879, Cys-873–Cys-888, Cys-890–Cys-907, Cys-914–Cys-930, Cys-924–Cys-939, Cys-941–Cys-960, Cys-967–Cys-981, Cys-975–Cys-990, Cys-992–Cys-1011, Cys-1033–Cys-1046, Cys-1040–Cys-1055, Cys-1057–Cys-1069, Cys-1075–Cys-1087, Cys-1081–Cys-1096, Cys-1098–Cys-1117, Cys-1124–Cys-1137, Cys-1131–Cys-1146, Cys-1148–Cys-1167, Cys-1174–Cys-1188, Cys-1182–Cys-1197, and Cys-1199–Cys-1218. A glycan (N-linked (GlcNAc...) asparagine) is linked at Asn-383. Residue Asn-515 is glycosylated (N-linked (GlcNAc...) asparagine). Positions 1230-1406 (DLVFLIDGSG…DLDTRLRSMI (177 aa)) constitute a VWFA domain. The N-linked (GlcNAc...) asparagine glycan is linked to Asn-1350. EGF-like domains lie at 1421-1466 (SEDV…RVCG), 1466-1510 (GGDL…GFCV), 1521-1562 (HDAN…GQCA), 1563-1608 (YPGS…DICL), 1608-1656 (LKNE…RVCV), 1658-1706 (LQNE…MVCK), 1708-1755 (LVNE…RRCE), 1759-1807 (TNDK…RLCI), 1809-1860 (VIPE…RLCK), 1862-1911 (LQNE…RKCK), 1913-1961 (LINE…RRCL), 1963-2011 (RINE…RICR), 2014-2062 (LVDE…RLCQ), 2068-2112 (PPPE…GSCS), 2113-2160 (IINE…RMCK), 2162-2208 (MVNE…RICK), 2210-2258 (LTNE…RACR), 2260-2308 (LVNE…RVCL), 2310-2358 (FINE…RVCV), 2360-2408 (LVDE…RVCS), 2409-2455 (APEV…RVCV), 2456-2504 (RNNA…RVCE), 2513-2563 (PRHP…RLCV), 2565-2616 (TEPV…RICK), 2618-2666 (LINE…RICS), 2668-2714 (SVNE…HRCS), 2716-2763 (MINE…RICR), 2763-2811 (RLNE…RICI), and 2833-2872 (REFP…GKCQ). 66 disulfides stabilise this stretch: Cys-1425–Cys-1441, Cys-1433–Cys-1450, Cys-1452–Cys-1465, Cys-1470–Cys-1484, Cys-1478–Cys-1494, Cys-1496–Cys-1509, Cys-1525–Cys-1538, Cys-1532–Cys-1547, Cys-1549–Cys-1561, Cys-1567–Cys-1583, Cys-1575–Cys-1592, Cys-1594–Cys-1607, Cys-1612–Cys-1625, Cys-1619–Cys-1634, Cys-1636–Cys-1655, Cys-1662–Cys-1675, Cys-1669–Cys-1684, Cys-1686–Cys-1705, Cys-1712–Cys-1726, Cys-1720–Cys-1735, Cys-1737–Cys-1754, Cys-1763–Cys-1776, Cys-1770–Cys-1786, Cys-1788–Cys-1806, Cys-1813–Cys-1829, Cys-1821–Cys-1838, Cys-1840–Cys-1859, Cys-1866–Cys-1880, Cys-1873–Cys-1889, Cys-1891–Cys-1910, Cys-1917–Cys-1930, Cys-1924–Cys-1939, Cys-1941–Cys-1960, Cys-1967–Cys-1980, Cys-1974–Cys-1989, Cys-1991–Cys-2010, Cys-2018–Cys-2031, Cys-2025–Cys-2040, Cys-2042–Cys-2061, Cys-2072–Cys-2088, Cys-2080–Cys-2097, Cys-2099–Cys-2111, Cys-2117–Cys-2131, Cys-2125–Cys-2140, Cys-2142–Cys-2159, Cys-2166–Cys-2180, Cys-2174–Cys-2189, Cys-2191–Cys-2207, Cys-2214–Cys-2228, Cys-2222–Cys-2237, Cys-2239–Cys-2257, Cys-2264–Cys-2278, Cys-2272–Cys-2287, Cys-2289–Cys-2307, Cys-2314–Cys-2327, Cys-2321–Cys-2336, Cys-2338–Cys-2357, Cys-2364–Cys-2377, Cys-2371–Cys-2386, Cys-2388–Cys-2407, Cys-2413–Cys-2425, Cys-2419–Cys-2435, Cys-2437–Cys-2454, Cys-2460–Cys-2474, Cys-2468–Cys-2483, and Cys-2485–Cys-2503. Positions 2492-2521 (RSPDSSQRGRVCEPPPPPSPPPRHPCQDPE) are disordered. Residues 2504–2515 (EPPPPPSPPPRH) show a composition bias toward pro residues. 21 disulfides stabilise this stretch: Cys-2517-Cys-2531, Cys-2525-Cys-2541, Cys-2543-Cys-2562, Cys-2569-Cys-2583, Cys-2577-Cys-2594, Cys-2596-Cys-2615, Cys-2622-Cys-2636, Cys-2630-Cys-2645, Cys-2647-Cys-2665, Cys-2672-Cys-2686, Cys-2680-Cys-2695, Cys-2697-Cys-2713, Cys-2720-Cys-2734, Cys-2728-Cys-2743, Cys-2745-Cys-2762, Cys-2767-Cys-2781, Cys-2775-Cys-2790, Cys-2792-Cys-2810, Cys-2837-Cys-2850, Cys-2842-Cys-2856, and Cys-2858-Cys-2871. The SEA 1 domain occupies 2873 to 2999 (EVQETPFELR…GSLRVASDTD (127 aa)). An N-linked (GlcNAc...) asparagine glycan is attached at Asn-2944. One can recognise an EGF-like 47 domain in the interval 3009–3048 (EWGNCGGMSCKEHLKEVCIAGHICGCPDGMKRRDANSECR). Disulfide bonds link Cys-3013–Cys-3026, Cys-3018–Cys-3032, and Cys-3034–Cys-3047. An SEA 2 domain is found at 3049-3174 (VVESWNVPLW…SELYLNPTQP (126 aa)). N-linked (GlcNAc...) asparagine glycosylation is found at Asn-3120 and Asn-3130. EGF-like domains follow at residues 3176-3220 (PFNP…KKCL), 3224-3272 (GFNE…SLCV), and 3272-3324 (VLDY…TLCM). 15 disulfides stabilise this stretch: Cys-3180-Cys-3191, Cys-3185-Cys-3201, Cys-3203-Cys-3219, Cys-3228-Cys-3242, Cys-3236-Cys-3251, Cys-3253-Cys-3271, Cys-3276-Cys-3288, Cys-3282-Cys-3297, Cys-3299-Cys-3323, Cys-3332-Cys-3345, Cys-3339-Cys-3354, Cys-3356-Cys-3372, Cys-3377-Cys-3386, Cys-3380-Cys-3397, and Cys-3399-Cys-3408. An N-linked (GlcNAc...) asparagine glycan is attached at Asn-3285. In terms of domain architecture, EGF-like 51; calcium-binding spans 3328–3373 (DVDECALGLNNCSGVAHCIDRAVGYTCKCPDGYIDGNPDEPGRVCG). An N-linked (GlcNAc...) asparagine; atypical glycan is attached at Asn-3337. An N-linked (GlcNAc...) asparagine glycan is attached at Asn-3338. The EGF-like 52 domain maps to 3373 to 3409 (GALLCDLCNAHGDCVHNTATNNITCVCTDGWTGPQCQ). Residue Asn-3394 is glycosylated (N-linked (GlcNAc...) asparagine). Asn-3414 is a glycosylation site (N-linked (GlcNAc...) asparagine). A helical membrane pass occupies residues 3418–3438 (VLLILLALLFLLLTLCCLLYF). At 3439 to 3767 (CTKCHCFKGR…SQTSTHVTKK (329 aa)) the chain is on the cytoplasmic side. The tract at residues 3582-3729 (TTTTDEQGNT…EEDVEHSVGD (148 aa)) is disordered. Residues 3588-3597 (QGNTIVTTTE) are compositionally biased toward polar residues. Low complexity predominate over residues 3630 to 3665 (QSQSQQQQSMSQGMSQSMSQHATSAGYSSSGMESSA). Basic and acidic residues predominate over residues 3675–3684 (HTGERERGGS). Residues 3690–3702 (IGRARGMAAASSG) show a composition bias toward low complexity.

Expressed in the hypodermis at the sites of muscle contact, in striated muscles including body wall muscles, the anal sphincter muscles and the junctions between the anal sphincter muscle and rectal cuticle. Also expressed in non-muscle cells including the excretory duct cell and pore cells.

It localises to the cell membrane. It is found in the cell junction. The protein localises to the hemidesmosome. Functionally, involved in cell adhesion and required for organ positioning and attachment. At the hypodermal surface, required for attachment of the hypdermermis to the basal cuticle in postembryonic development, possibly through intermediate filaments of the cytoskeleton. The polypeptide is Transmembrane cell adhesion receptor mua-3 (Caenorhabditis elegans).